The chain runs to 100 residues: Aspartyl/glutamyl-tRNA(Asn/Gln) amidotransferase subunit C (100 aa).

It belongs to the GatC family. Heterotrimer of A, B and C subunits.

It catalyses the reaction L-glutamyl-tRNA(Gln) + L-glutamine + ATP + H2O = L-glutaminyl-tRNA(Gln) + L-glutamate + ADP + phosphate + H(+). The enzyme catalyses L-aspartyl-tRNA(Asn) + L-glutamine + ATP + H2O = L-asparaginyl-tRNA(Asn) + L-glutamate + ADP + phosphate + 2 H(+). Allows the formation of correctly charged Asn-tRNA(Asn) or Gln-tRNA(Gln) through the transamidation of misacylated Asp-tRNA(Asn) or Glu-tRNA(Gln) in organisms which lack either or both of asparaginyl-tRNA or glutaminyl-tRNA synthetases. The reaction takes place in the presence of glutamine and ATP through an activated phospho-Asp-tRNA(Asn) or phospho-Glu-tRNA(Gln). This is Aspartyl/glutamyl-tRNA(Asn/Gln) amidotransferase subunit C from Streptococcus equi subsp. zooepidemicus (strain MGCS10565).